The chain runs to 320 residues: 1-aminocyclopropane-1-carboxylate oxidase 2 (320 aa).

Positions 111–143 (DEYRTAMKDFGKRLENLAEDLLDLLCENLGLEK) form a coiled coil. One can recognise a Fe2OG dioxygenase domain in the interval 156-256 (PTFGTKVSNY…RMSVASFYNP (101 aa)). Residues H180, D182, and H237 each contribute to the Fe cation site. R247 is a binding site for 2-oxoglutarate.

This sequence belongs to the iron/ascorbate-dependent oxidoreductase family. Fe(2+) serves as cofactor. It depends on Cu(2+) as a cofactor. In terms of tissue distribution, expressed in vegetative tissues. Constitutively expressed in leaves and blades. In ethylene exposed etiolated seedlings, localized in cells at the outer side of the exaggerated hook in an ethylene-dependent manner and following an ethylene sensitive pattern. Also detected in the root tip when treated by ethylene.

It catalyses the reaction 1-aminocyclopropane-1-carboxylate + L-ascorbate + O2 = ethene + L-dehydroascorbate + hydrogen cyanide + CO2 + 2 H2O. Its pathway is alkene biosynthesis; ethylene biosynthesis via S-adenosyl-L-methionine; ethylene from S-adenosyl-L-methionine: step 2/2. Its function is as follows. Enzyme involved in the ethylene biosynthesis. Required to mediate the 1-aminocyclopropane-1-carboxylic acid (ACC)-mediated reversion of the ABA-induced inhibition of seed germination via endosperm rupture. May promote stem elongation by maximizing the extensibility cells, possibly by activating ethylene biosynthesis, in response to very-long-chain fatty acids (VLCFAs C20:0 to C30:0). The polypeptide is 1-aminocyclopropane-1-carboxylate oxidase 2 (ACO2) (Arabidopsis thaliana (Mouse-ear cress)).